The sequence spans 363 residues: Ribosome-binding ATPase YchF (363 aa).

One can recognise an OBG-type G domain in the interval 3–256; sequence FKCGIVGLPN…LEDEEKVDFL (254 aa). 12–17 lines the ATP pocket; it reads NVGKST. Mg(2+) contacts are provided by serine 16 and threonine 36. The 84-residue stretch at 278–361 folds into the TGS domain; that stretch reads NLQTYFTAGV…QDGDVMHFRF (84 aa).

The protein belongs to the TRAFAC class OBG-HflX-like GTPase superfamily. OBG GTPase family. YchF/OLA1 subfamily. Requires Mg(2+) as cofactor.

In terms of biological role, ATPase that binds to both the 70S ribosome and the 50S ribosomal subunit in a nucleotide-independent manner. The protein is Ribosome-binding ATPase YchF of Haemophilus ducreyi (strain 35000HP / ATCC 700724).